The chain runs to 288 residues: 4-diphosphocytidyl-2-C-methyl-D-erythritol kinase (288 aa).

Lys-11 is an active-site residue. 95-105 (PVAAGMAGGSS) is an ATP binding site. The active site involves Asp-137.

The protein belongs to the GHMP kinase family. IspE subfamily.

It catalyses the reaction 4-CDP-2-C-methyl-D-erythritol + ATP = 4-CDP-2-C-methyl-D-erythritol 2-phosphate + ADP + H(+). The protein operates within isoprenoid biosynthesis; isopentenyl diphosphate biosynthesis via DXP pathway; isopentenyl diphosphate from 1-deoxy-D-xylulose 5-phosphate: step 3/6. Functionally, catalyzes the phosphorylation of the position 2 hydroxy group of 4-diphosphocytidyl-2C-methyl-D-erythritol. The protein is 4-diphosphocytidyl-2-C-methyl-D-erythritol kinase of Lachnospira eligens (strain ATCC 27750 / DSM 3376 / VPI C15-48 / C15-B4) (Eubacterium eligens).